The primary structure comprises 253 residues: 3-dehydroquinate dehydratase (253 aa).

Residues 46-48 (EWR) and Arg82 each bind 3-dehydroquinate. His143 (proton donor/acceptor) is an active-site residue. The Schiff-base intermediate with substrate role is filled by Lys170. 3-dehydroquinate is bound by residues Arg213, Ser232, and Gln236.

The protein belongs to the type-I 3-dehydroquinase family. In terms of assembly, homodimer.

The enzyme catalyses 3-dehydroquinate = 3-dehydroshikimate + H2O. The protein operates within metabolic intermediate biosynthesis; chorismate biosynthesis; chorismate from D-erythrose 4-phosphate and phosphoenolpyruvate: step 3/7. Involved in the third step of the chorismate pathway, which leads to the biosynthesis of aromatic amino acids. Catalyzes the cis-dehydration of 3-dehydroquinate (DHQ) and introduces the first double bond of the aromatic ring to yield 3-dehydroshikimate. In Syntrophotalea carbinolica (strain DSM 2380 / NBRC 103641 / GraBd1) (Pelobacter carbinolicus), this protein is 3-dehydroquinate dehydratase.